A 137-amino-acid chain; its full sequence is Small ribosomal subunit protein uS12 (137 aa).

The tract at residues 1–57 is disordered; the sequence is MPTINQLVRKPRKSKVKKSKSPALNVGYNSRKKVQTNVSSPQKRGVATRVGTMTPKK. Residues 9-20 show a composition bias toward basic residues; sequence RKPRKSKVKKSK. Aspartate 102 bears the 3-methylthioaspartic acid mark.

Belongs to the universal ribosomal protein uS12 family. Part of the 30S ribosomal subunit. Contacts proteins S8 and S17. May interact with IF1 in the 30S initiation complex.

In terms of biological role, with S4 and S5 plays an important role in translational accuracy. Its function is as follows. Interacts with and stabilizes bases of the 16S rRNA that are involved in tRNA selection in the A site and with the mRNA backbone. Located at the interface of the 30S and 50S subunits, it traverses the body of the 30S subunit contacting proteins on the other side and probably holding the rRNA structure together. The combined cluster of proteins S8, S12 and S17 appears to hold together the shoulder and platform of the 30S subunit. This chain is Small ribosomal subunit protein uS12, found in Streptococcus suis (strain 05ZYH33).